The following is a 120-amino-acid chain: UPF0231 protein YacL (120 aa).

The protein belongs to the UPF0231 family.

This chain is UPF0231 protein YacL, found in Salmonella typhi.